A 79-amino-acid polypeptide reads, in one-letter code: Sec-independent protein translocase protein TatA (79 aa).

The helical transmembrane segment at 1 to 21 (MGGISIWQLLIIALIVVLLFG) threads the bilayer. The interval 43–79 (MSSEEDKKALEDTEAAKTAQTTQQATEKKPESNKEQA) is disordered. The segment covering 46–57 (EEDKKALEDTEA) has biased composition (basic and acidic residues). Positions 58-67 (AKTAQTTQQA) are enriched in low complexity. Residues 68 to 79 (TEKKPESNKEQA) show a composition bias toward basic and acidic residues.

Belongs to the TatA/E family. As to quaternary structure, the Tat system comprises two distinct complexes: a TatABC complex, containing multiple copies of TatA, TatB and TatC subunits, and a separate TatA complex, containing only TatA subunits. Substrates initially bind to the TatABC complex, which probably triggers association of the separate TatA complex to form the active translocon.

The protein resides in the cell inner membrane. Part of the twin-arginine translocation (Tat) system that transports large folded proteins containing a characteristic twin-arginine motif in their signal peptide across membranes. TatA could form the protein-conducting channel of the Tat system. The chain is Sec-independent protein translocase protein TatA from Shewanella putrefaciens (strain CN-32 / ATCC BAA-453).